Here is a 198-residue protein sequence, read N- to C-terminus: Uracil phosphoribosyltransferase homolog (198 aa).

Belongs to the UPRTase family.

It is found in the plastid. The protein resides in the chloroplast. The polypeptide is Uracil phosphoribosyltransferase homolog (Porphyra purpurea (Red seaweed)).